A 267-amino-acid chain; its full sequence is MPQVTMRQMLEAGVHFGHQCRYWHPNMAQYIFGARGKIHIINLEKTVPLFNDAMNYLSSIAQKRGTILFLGTKRSARASIKEEAERCGMPFMTQRWLGGTLTNFRTVKQSVARLKELEAAETDGTFDKLVKHEVLSLRREREKLDASLGGIKEMNRLPDAIFVIDIGHEDIAIKEAKKLGIPVIAVVDTNYNPNLVDYAIPGNDDAIRAVQLYARAAADAVLEGKAAAPNSASVREEEFSAESADEGKGRRAPAKKGEKKADAPAAE.

The disordered stretch occupies residues 226 to 267 (AAAPNSASVREEEFSAESADEGKGRRAPAKKGEKKADAPAAE). Basic and acidic residues predominate over residues 245–267 (DEGKGRRAPAKKGEKKADAPAAE).

The protein belongs to the universal ribosomal protein uS2 family.

The sequence is that of Small ribosomal subunit protein uS2 from Xanthomonas oryzae pv. oryzae (strain MAFF 311018).